The sequence spans 330 residues: Putative protein N-methyltransferase FAM86B2 (330 aa).

Residue Met-1 is modified to N-acetylmethionine. Residues Trp-139, 165 to 167, Trp-228, and Ala-247 each bind S-adenosyl-L-methionine; that span reads GSG.

This sequence belongs to the class I-like SAM-binding methyltransferase superfamily. EEF2KMT family. In terms of assembly, interacts with EEF2KMT.

The polypeptide is Putative protein N-methyltransferase FAM86B2 (FAM86B2) (Homo sapiens (Human)).